A 499-amino-acid chain; its full sequence is Cytochrome P450 11B1, mitochondrial (499 aa).

The transit peptide at 1-24 (MALRVTADVWLARPWQCLHRTRAL) directs the protein to the mitochondrion. Cys446 provides a ligand contact to heme.

It belongs to the cytochrome P450 family. Heme is required as a cofactor. In terms of tissue distribution, adrenal zona fasciculata/reticularis.

It localises to the mitochondrion inner membrane. It catalyses the reaction a steroid + 2 reduced [adrenodoxin] + O2 + 2 H(+) = an 11beta-hydroxysteroid + 2 oxidized [adrenodoxin] + H2O. The enzyme catalyses 21-hydroxyprogesterone + 2 reduced [adrenodoxin] + O2 + 2 H(+) = corticosterone + 2 oxidized [adrenodoxin] + H2O. The catalysed reaction is 21-hydroxyprogesterone + 2 reduced [adrenodoxin] + O2 + 2 H(+) = 18-hydroxy-11-deoxycorticosterone + 2 oxidized [adrenodoxin] + H2O. It carries out the reaction 21-hydroxyprogesterone + 2 reduced [adrenodoxin] + O2 + 2 H(+) = 19-hydroxy-11-deoxycorticosterone + 2 oxidized [adrenodoxin] + H2O. It catalyses the reaction 11-deoxycortisol + 2 reduced [adrenodoxin] + O2 + 2 H(+) = cortisol + 2 oxidized [adrenodoxin] + H2O. The enzyme catalyses cortisol + 2 reduced [adrenodoxin] + O2 + 2 H(+) = 18-hydroxycortisol + 2 oxidized [adrenodoxin] + H2O. The catalysed reaction is 11-deoxycortisol + 2 reduced [adrenodoxin] + O2 + 2 H(+) = 18-hydroxy-11-deoxycortisol + 2 oxidized [adrenodoxin] + H2O. Its pathway is steroid biosynthesis; glucocorticoid biosynthesis. It functions in the pathway steroid hormone biosynthesis. In terms of biological role, a cytochrome P450 monooxygenase involved in the biosynthesis of adrenal corticoids. Catalyzes a variety of reactions that are essential for many species, including detoxification, defense, and the formation of endogenous chemicals like steroid hormones. Steroid 11beta, 18- and 19-hydroxylase with preferred regioselectivity at 11beta, then 18, and lastly 19. Catalyzes the hydroxylation of 11-deoxycortisol and 11-deoxycorticosterone (21-hydroxyprogesterone) at 11beta position, yielding cortisol or corticosterone, respectively, but cannot produce aldosterone. Mechanistically, uses molecular oxygen inserting one oxygen atom into a substrate for hydroxylation and reducing the second into a water molecule. Two electrons are provided by NADPH via a two-protein mitochondrial transfer system comprising flavoprotein FDXR (adrenodoxin/ferredoxin reductase) and nonheme iron-sulfur protein FDX1 or FDX2 (adrenodoxin/ferredoxin). Due to its lack of 18-oxidation activity, it is incapable of generating aldosterone. Could also be involved in the androgen metabolic pathway. In Rattus norvegicus (Rat), this protein is Cytochrome P450 11B1, mitochondrial (Cyp11b1).